Here is a 66-residue protein sequence, read N- to C-terminus: Large ribosomal subunit protein bL35 (66 aa).

Belongs to the bacterial ribosomal protein bL35 family.

This Thermomicrobium roseum (strain ATCC 27502 / DSM 5159 / P-2) protein is Large ribosomal subunit protein bL35.